Consider the following 451-residue polypeptide: Bifunctional protein GlmU (451 aa).

The segment at 1 to 229 is pyrophosphorylase; that stretch reads MQRHAIILAA…FDEIIGVNDR (229 aa). UDP-N-acetyl-alpha-D-glucosamine contacts are provided by residues 8–11, lysine 22, glutamine 72, and 77–78; these read LAAG and GT. Aspartate 102 is a Mg(2+) binding site. The UDP-N-acetyl-alpha-D-glucosamine site is built by glycine 139, glutamate 154, and asparagine 227. Asparagine 227 contributes to the Mg(2+) binding site. Residues 230 to 250 are linker; it reads LMLSEAEKALQQRINRYHMEN. The tract at residues 251–451 is N-acetyltransferase; it reads GVTIIDPSST…QVNKEGYLKK (201 aa). Residues arginine 332 and lysine 350 each coordinate UDP-N-acetyl-alpha-D-glucosamine. The active-site Proton acceptor is the histidine 362. Tyrosine 365 and asparagine 376 together coordinate UDP-N-acetyl-alpha-D-glucosamine. Residues 385–386, alanine 422, and arginine 439 each bind acetyl-CoA; that span reads NY.

The protein in the N-terminal section; belongs to the N-acetylglucosamine-1-phosphate uridyltransferase family. In the C-terminal section; belongs to the transferase hexapeptide repeat family. As to quaternary structure, homotrimer. Mg(2+) serves as cofactor.

It is found in the cytoplasm. It catalyses the reaction alpha-D-glucosamine 1-phosphate + acetyl-CoA = N-acetyl-alpha-D-glucosamine 1-phosphate + CoA + H(+). It carries out the reaction N-acetyl-alpha-D-glucosamine 1-phosphate + UTP + H(+) = UDP-N-acetyl-alpha-D-glucosamine + diphosphate. Its pathway is nucleotide-sugar biosynthesis; UDP-N-acetyl-alpha-D-glucosamine biosynthesis; N-acetyl-alpha-D-glucosamine 1-phosphate from alpha-D-glucosamine 6-phosphate (route II): step 2/2. The protein operates within nucleotide-sugar biosynthesis; UDP-N-acetyl-alpha-D-glucosamine biosynthesis; UDP-N-acetyl-alpha-D-glucosamine from N-acetyl-alpha-D-glucosamine 1-phosphate: step 1/1. It functions in the pathway bacterial outer membrane biogenesis; LPS lipid A biosynthesis. Catalyzes the last two sequential reactions in the de novo biosynthetic pathway for UDP-N-acetylglucosamine (UDP-GlcNAc). The C-terminal domain catalyzes the transfer of acetyl group from acetyl coenzyme A to glucosamine-1-phosphate (GlcN-1-P) to produce N-acetylglucosamine-1-phosphate (GlcNAc-1-P), which is converted into UDP-GlcNAc by the transfer of uridine 5-monophosphate (from uridine 5-triphosphate), a reaction catalyzed by the N-terminal domain. This chain is Bifunctional protein GlmU, found in Staphylococcus epidermidis (strain ATCC 35984 / DSM 28319 / BCRC 17069 / CCUG 31568 / BM 3577 / RP62A).